Here is a 276-residue protein sequence, read N- to C-terminus: NH(3)-dependent NAD(+) synthetase (276 aa).

43 to 50 contributes to the ATP binding site; it reads GISGGVDS. Position 49 (D49) interacts with Mg(2+). Residue R146 participates in deamido-NAD(+) binding. Position 166 (T166) interacts with ATP. A Mg(2+)-binding site is contributed by E171. Residues K179 and D186 each contribute to the deamido-NAD(+) site. Residues K195 and T217 each contribute to the ATP site. Deamido-NAD(+) is bound at residue 266–267; it reads HK.

It belongs to the NAD synthetase family. In terms of assembly, homodimer.

The enzyme catalyses deamido-NAD(+) + NH4(+) + ATP = AMP + diphosphate + NAD(+) + H(+). The protein operates within cofactor biosynthesis; NAD(+) biosynthesis; NAD(+) from deamido-NAD(+) (ammonia route): step 1/1. Functionally, catalyzes the ATP-dependent amidation of deamido-NAD to form NAD. Uses ammonia as a nitrogen source. The polypeptide is NH(3)-dependent NAD(+) synthetase (Vibrio vulnificus (strain CMCP6)).